Here is a 569-residue protein sequence, read N- to C-terminus: Endonuclease/exonuclease/phosphatase family domain-containing protein 1 (569 aa).

G2 is lipidated: N-myristoyl glycine. Residues S16 and S25 each carry the phosphoserine modification. Positions 38–67 constitute a HhH domain; that stretch reads ERLNINTATEEELMTLPGVTRAVARSIVEY. Phosphoserine occurs at positions 106, 110, 160, and 173. Positions 200 to 224 are disordered; that stretch reads SRPPSTHTNGGLTFTAKPHPSPTSL. Polar residues predominate over residues 202-211; it reads PPSTHTNGGL. T265 bears the Phosphothreonine mark. Residues 549-569 form a disordered region; sequence VPRNGNGVTLEPSEANIKHER.

The chain is Endonuclease/exonuclease/phosphatase family domain-containing protein 1 (Eepd1) from Mus musculus (Mouse).